Reading from the N-terminus, the 556-residue chain is Arginine--tRNA ligase 1 (556 aa).

A 'HIGH' region motif is present at residues 132–142; it reads ANPTGNLHLGH.

Belongs to the class-I aminoacyl-tRNA synthetase family. As to quaternary structure, monomer.

The protein localises to the cytoplasm. The enzyme catalyses tRNA(Arg) + L-arginine + ATP = L-arginyl-tRNA(Arg) + AMP + diphosphate. The protein is Arginine--tRNA ligase 1 (argS1) of Halalkalibacterium halodurans (strain ATCC BAA-125 / DSM 18197 / FERM 7344 / JCM 9153 / C-125) (Bacillus halodurans).